Reading from the N-terminus, the 250-residue chain is MAAGTSNYWEDLRKQARQLENELDLKLVSFSKLCTSYSHSSARDGGRDRYSSDTTPLLNGSSQDRMFETMAIEIEQLLARLTGVNDKMAEYTNSAGVPSLNAALMHTLQRHRDILQDYTHEFHKTKANFMAIRERENLMGSVRKDIESYKSGSGVNNRRTELFLKEHDHLRNSDRLIEETISIAMATKENMTSQRGMLKSIHSKMNTLANRFPAVNSLIQRINLRKRRDSLILGGVIGICTILLLLYAFH.

The residue at position 2 (A2) is an N-acetylalanine. Residues 2–229 (AAGTSNYWED…QRINLRKRRD (228 aa)) lie on the Cytoplasmic side of the membrane. Positions 9 to 30 (WEDLRKQARQLENELDLKLVSF) form a coiled coil. The segment at 38 to 59 (SHSSARDGGRDRYSSDTTPLLN) is disordered. Positions 41–51 (SARDGGRDRYS) are enriched in basic and acidic residues. Positions 68–95 (ETMAIEIEQLLARLTGVNDKMAEYTNSA) form a coiled coil. Position 141 is a phosphoserine (S141). The helical; Anchor for type IV membrane protein transmembrane segment at 230–250 (SLILGGVIGICTILLLLYAFH) threads the bilayer.

This sequence belongs to the GOSR1 family. Component of several multiprotein Golgi SNARE complexes. Identified in a SNARE complex with BET1, STX5 and YKT6, in a SNARE complex with BET1L, STX5 and YKT6, in a SNARE complex with STX5, GOSR2, SEC22B and BET1, and in complex with STX5 and COG3. Interacts with GABARAPL2.

The protein localises to the golgi apparatus membrane. Functionally, involved in transport from the ER to the Golgi apparatus as well as in intra-Golgi transport. It belongs to a super-family of proteins called t-SNAREs or soluble NSF (N-ethylmaleimide-sensitive factor) attachment protein receptor. May play a protective role against hydrogen peroxide induced cytotoxicity under glutathione depleted conditions in neuronal cells by regulating the intracellular ROS levels via inhibition of p38 MAPK (MAPK11, MAPK12, MAPK13 and MAPK14). Participates in docking and fusion stage of ER to cis-Golgi transport. Plays an important physiological role in VLDL-transport vesicle-Golgi fusion and thus in VLDL delivery to the hepatic cis-Golgi. This chain is Golgi SNAP receptor complex member 1 (GOSR1), found in Cricetulus griseus (Chinese hamster).